A 290-amino-acid chain; its full sequence is 33 kDa chaperonin (290 aa).

Intrachain disulfides connect Cys231-Cys233 and Cys263-Cys266.

This sequence belongs to the HSP33 family. In terms of processing, under oxidizing conditions two disulfide bonds are formed involving the reactive cysteines. Under reducing conditions zinc is bound to the reactive cysteines and the protein is inactive.

Its subcellular location is the cytoplasm. Functionally, redox regulated molecular chaperone. Protects both thermally unfolding and oxidatively damaged proteins from irreversible aggregation. Plays an important role in the bacterial defense system toward oxidative stress. The sequence is that of 33 kDa chaperonin from Thermotoga maritima (strain ATCC 43589 / DSM 3109 / JCM 10099 / NBRC 100826 / MSB8).